A 76-amino-acid chain; its full sequence is uncharacterized protein (76 aa).

This is an uncharacterized protein from Ornithodoros (relapsing fever ticks).